Here is a 427-residue protein sequence, read N- to C-terminus: Serine hydroxymethyltransferase (427 aa).

(6S)-5,6,7,8-tetrahydrofolate contacts are provided by residues leucine 122 and 126 to 128 (GHL). Position 231 is an N6-(pyridoxal phosphate)lysine (lysine 231). (6S)-5,6,7,8-tetrahydrofolate is bound by residues glutamate 247 and 355 to 357 (SPF).

This sequence belongs to the SHMT family. As to quaternary structure, homodimer. Pyridoxal 5'-phosphate serves as cofactor.

It is found in the cytoplasm. It carries out the reaction (6R)-5,10-methylene-5,6,7,8-tetrahydrofolate + glycine + H2O = (6S)-5,6,7,8-tetrahydrofolate + L-serine. It participates in one-carbon metabolism; tetrahydrofolate interconversion. It functions in the pathway amino-acid biosynthesis; glycine biosynthesis; glycine from L-serine: step 1/1. In terms of biological role, catalyzes the reversible interconversion of serine and glycine with tetrahydrofolate (THF) serving as the one-carbon carrier. This reaction serves as the major source of one-carbon groups required for the biosynthesis of purines, thymidylate, methionine, and other important biomolecules. Also exhibits THF-independent aldolase activity toward beta-hydroxyamino acids, producing glycine and aldehydes, via a retro-aldol mechanism. The sequence is that of Serine hydroxymethyltransferase from Crocosphaera subtropica (strain ATCC 51142 / BH68) (Cyanothece sp. (strain ATCC 51142)).